The following is a 147-amino-acid chain: Large ribosomal subunit protein uL11 (147 aa).

It belongs to the universal ribosomal protein uL11 family. In terms of assembly, part of the ribosomal stalk of the 50S ribosomal subunit. Interacts with L10 and the large rRNA to form the base of the stalk. L10 forms an elongated spine to which L12 dimers bind in a sequential fashion forming a multimeric L10(L12)X complex. Post-translationally, one or more lysine residues are methylated.

Forms part of the ribosomal stalk which helps the ribosome interact with GTP-bound translation factors. The sequence is that of Large ribosomal subunit protein uL11 from Thermus thermophilus (strain ATCC BAA-163 / DSM 7039 / HB27).